A 248-amino-acid chain; its full sequence is MALLEICCYSMECALTAQQNGADRVELCAAPKEGGLTPSLGVLKSVRQRVTIPVHPIIRPRGGDFCYSDGEFAAILEDVRTVRELGFPGLVTGVLEVDGNVDMPRMEKIMAAAGPLAVTFHRAFDMCANPLNTLNNLTELGITRVLTSGQKSDALQGLSKIMELIAHRDAPIIMAGAGVRAENLHHFLDAGVLEVHSSAGAWQASPMRYRNQGLSMSSDAHADEYLRYVVDGAAVAEMKGIIERHQAK.

The protein belongs to the CutC family. As to quaternary structure, homodimer.

Its subcellular location is the cytoplasm. The sequence is that of PF03932 family protein CutC from Escherichia coli O45:K1 (strain S88 / ExPEC).